The primary structure comprises 75 residues: RNA-binding protein KhpA (75 aa).

The KH domain maps to 29-75; the sequence is KKVYEIVVNEEDVGQVIGKDGRTIKSLKILLSALMGDSKEITIKVVR.

Belongs to the KhpA RNA-binding protein family. In terms of assembly, forms a complex with KhpB.

Its subcellular location is the cytoplasm. Its function is as follows. A probable RNA chaperone. Forms a complex with KhpB which binds to cellular RNA and controls its expression. Plays a role in peptidoglycan (PG) homeostasis and cell length regulation. This chain is RNA-binding protein KhpA, found in Thermotoga maritima (strain ATCC 43589 / DSM 3109 / JCM 10099 / NBRC 100826 / MSB8).